The sequence spans 409 residues: LIM/homeobox protein ttx-3 (409 aa).

2 LIM zinc-binding domains span residues 108 to 169 (NQCC…RYQK) and 171 to 232 (CRKC…VRST). 2 disordered regions span residues 245–299 (AVVA…RTSF) and 372–409 (MNPPLSSSSSGHSTDGYQLNTPPLSSEIYSPNSNYTHL). Residues 247-267 (VAPPPPPPTTTTAPPPAAPEQ) are compositionally biased toward pro residues. A DNA-binding region (homeobox) is located at residues 292–351 (SKRMRTSFKHHQLRAMKTYFALNHNPDAKDLKQLAAKTNLTKRVLQVWFQNARAKYRREL). The span at 382-409 (GHSTDGYQLNTPPLSSEIYSPNSNYTHL) shows a compositional bias: polar residues.

In terms of tissue distribution, expressed in the AIA, AIN and AIY interneurons, and in the NSM neurons. Expressed also in ADL and ASI sensory neurons in 60-70% of L2 larvae. Expression is also detected in head muscles of embryos and some early larvae but not late larvae or adults.

It is found in the nucleus. The protein localises to the perikaryon. The protein resides in the cell projection. Its subcellular location is the axon. Its function is as follows. Transcription factor. Binds to a sequence motif, 5'-TTATTGGCTTCGTTAA-3', which may be involved in AIY interneuron function, in the regulatory elements of target genes; binding is more efficient, in vitro, together with homeobox protein ceh-10. Required for specification of the AIA and AIY interneurons and the NSM neurons. Positively regulates the expression of a number of genes including ceh-10, ceh-23, kal-1, hen-1, ser-2, unc-17 and sra-11 in AIY neurons, and cat-4, flp-4, bas-1, ptps-1 and mgl-1 in NSM neurons. In concert with WNT/beta-catenin signaling, initiates expression of homeobox ceh-10 in AIY, but not in the sister cells, SMDD motor neurons. Also acts in an autoregulatory feedback loop to maintain its own expression. Plays a role in the thermotactic response, olfactory imprinting, regulation of longevity, control of dauer formation and axon outgrowth and pathfinding. Not required for normal chemosensory behavior. In Caenorhabditis elegans, this protein is LIM/homeobox protein ttx-3.